Consider the following 207-residue polypeptide: Sodium/potassium-transporting ATPase subunit beta-1-interacting protein 1 (207 aa).

3 helical membrane passes run 2–22 (GRCS…AAAL), 35–55 (APIL…LGTL), and 62–82 (LILY…IICF). An N-linked (GlcNAc...) asparagine glycan is attached at Asn100. Residues 147-167 (ALSSALQIFLALFGFVYACYV) form a helical membrane-spanning segment.

Belongs to the NKAIN family. In terms of assembly, interacts with atp1b1 C-terminus.

Its subcellular location is the cell membrane. The chain is Sodium/potassium-transporting ATPase subunit beta-1-interacting protein 1 (nkain1) from Xenopus laevis (African clawed frog).